We begin with the raw amino-acid sequence, 474 residues long: Glutamate--tRNA ligase (474 aa).

A 'HIGH' region motif is present at residues proline 11 to glycine 21. The 'KMSKS' region motif lies at lysine 240–arginine 244. Residue lysine 243 participates in ATP binding.

It belongs to the class-I aminoacyl-tRNA synthetase family. Glutamate--tRNA ligase type 1 subfamily. Monomer.

It is found in the cytoplasm. The catalysed reaction is tRNA(Glu) + L-glutamate + ATP = L-glutamyl-tRNA(Glu) + AMP + diphosphate. Catalyzes the attachment of glutamate to tRNA(Glu) in a two-step reaction: glutamate is first activated by ATP to form Glu-AMP and then transferred to the acceptor end of tRNA(Glu). The polypeptide is Glutamate--tRNA ligase (Nitrobacter winogradskyi (strain ATCC 25391 / DSM 10237 / CIP 104748 / NCIMB 11846 / Nb-255)).